The sequence spans 95 residues: Aspartyl/glutamyl-tRNA(Asn/Gln) amidotransferase subunit C (95 aa).

This sequence belongs to the GatC family. As to quaternary structure, heterotrimer of A, B and C subunits.

It carries out the reaction L-glutamyl-tRNA(Gln) + L-glutamine + ATP + H2O = L-glutaminyl-tRNA(Gln) + L-glutamate + ADP + phosphate + H(+). The enzyme catalyses L-aspartyl-tRNA(Asn) + L-glutamine + ATP + H2O = L-asparaginyl-tRNA(Asn) + L-glutamate + ADP + phosphate + 2 H(+). Functionally, allows the formation of correctly charged Asn-tRNA(Asn) or Gln-tRNA(Gln) through the transamidation of misacylated Asp-tRNA(Asn) or Glu-tRNA(Gln) in organisms which lack either or both of asparaginyl-tRNA or glutaminyl-tRNA synthetases. The reaction takes place in the presence of glutamine and ATP through an activated phospho-Asp-tRNA(Asn) or phospho-Glu-tRNA(Gln). The chain is Aspartyl/glutamyl-tRNA(Asn/Gln) amidotransferase subunit C from Maricaulis maris (strain MCS10) (Caulobacter maris).